The chain runs to 525 residues: Sucrose transport protein (525 aa).

The Cytoplasmic portion of the chain corresponds to 1–37; sequence MAGRNIKNGENNKIAGSSLHLEKNPTTPPEAEATLKK. 12 consecutive transmembrane segments (helical) span residues 38 to 58, 72 to 92, 107 to 127, 145 to 165, 184 to 204, 230 to 250, 295 to 315, 338 to 358, 373 to 393, 422 to 442, 455 to 475, and 488 to 508; these read LGLV…QLSL, WAAY…PLVG, PFIA…GFAA, AIAV…TLQG, YANA…YAAG, SCFF…LSVV, MLIL…FLLF, GVHA…VMSL, LWGI…LVTK, LAIF…PFAL, GLSL…VSVT, and LPAF…SFTL. Residues 509–525 lie on the Cytoplasmic side of the membrane; sequence LPSPPPEAKIGGSMGGH.

It belongs to the glycoside-pentoside-hexuronide (GPH) cation symporter transporter (TC 2.A.2.4) family.

It is found in the membrane. Its pathway is glycan biosynthesis; sucrose metabolism. In terms of biological role, responsible for the transport of sucrose into the cell, with the concomitant uptake of protons (symport system). Can also transport maltose at a lesser rate. This Spinacia oleracea (Spinach) protein is Sucrose transport protein.